Here is a 194-residue protein sequence, read N- to C-terminus: Histone H1.0-A (194 aa).

2 disordered regions span residues 1-29 and 96-194; these read MTEN…YSDM and ADEV…GRKK. Residues 22-95 form the H15 domain; sequence DHPKYSDMIL…GASGSFRLAK (74 aa). Composition is skewed to basic residues over residues 102-164 and 172-194; these read PAKK…KTVR and KAKK…GRKK.

Belongs to the histone H1/H5 family.

Its subcellular location is the nucleus. The protein localises to the chromosome. In terms of biological role, histones H1 are necessary for the condensation of nucleosome chains into higher-order structures. The histones H1.0 are found in cells that are in terminal stages of differentiation or that have low rates of cell division. The chain is Histone H1.0-A (h1-0-a) from Xenopus laevis (African clawed frog).